Reading from the N-terminus, the 354-residue chain is Peptide chain release factor 1 (354 aa).

Position 230 is an N5-methylglutamine (Gln230).

It belongs to the prokaryotic/mitochondrial release factor family. In terms of processing, methylated by PrmC. Methylation increases the termination efficiency of RF1.

The protein localises to the cytoplasm. Its function is as follows. Peptide chain release factor 1 directs the termination of translation in response to the peptide chain termination codons UAG and UAA. The polypeptide is Peptide chain release factor 1 (Pelobacter propionicus (strain DSM 2379 / NBRC 103807 / OttBd1)).